The sequence spans 147 residues: 3-dehydroquinate dehydratase (147 aa).

The Proton acceptor role is filled by Tyr23. Positions 75, 81, and 88 each coordinate substrate. His101 (proton donor) is an active-site residue. Substrate is bound by residues 102–103 (LS) and Arg112.

This sequence belongs to the type-II 3-dehydroquinase family. As to quaternary structure, homododecamer.

It carries out the reaction 3-dehydroquinate = 3-dehydroshikimate + H2O. It participates in metabolic intermediate biosynthesis; chorismate biosynthesis; chorismate from D-erythrose 4-phosphate and phosphoenolpyruvate: step 3/7. In terms of biological role, catalyzes a trans-dehydration via an enolate intermediate. This is 3-dehydroquinate dehydratase from Stenotrophomonas maltophilia (strain K279a).